The primary structure comprises 399 residues: Elongation factor Tu (399 aa).

The 195-residue stretch at 10–204 (KPHVNIGTIG…AVDASIPEPE (195 aa)) folds into the tr-type G domain. The segment at 19–26 (GHVDHGKT) is G1. GTP is bound at residue 19–26 (GHVDHGKT). A Mg(2+)-binding site is contributed by T26. The tract at residues 60–64 (GITIN) is G2. Residues 81–84 (DCPG) are G3. GTP-binding positions include 81–85 (DCPGH) and 136–139 (NKCD). The interval 136-139 (NKCD) is G4. A G5 region spans residues 174–176 (SGL).

It belongs to the TRAFAC class translation factor GTPase superfamily. Classic translation factor GTPase family. EF-Tu/EF-1A subfamily. As to quaternary structure, monomer.

The protein localises to the cytoplasm. It carries out the reaction GTP + H2O = GDP + phosphate + H(+). GTP hydrolase that promotes the GTP-dependent binding of aminoacyl-tRNA to the A-site of ribosomes during protein biosynthesis. The protein is Elongation factor Tu of Prochlorococcus marinus (strain NATL1A).